The sequence spans 131 residues: D-ribose pyranase (131 aa).

His20 acts as the Proton donor in catalysis. Substrate contacts are provided by residues Asp28, His98, and 120-122; that span reads YAN.

The protein belongs to the RbsD / FucU family. RbsD subfamily. As to quaternary structure, homodecamer.

Its subcellular location is the cytoplasm. The catalysed reaction is beta-D-ribopyranose = beta-D-ribofuranose. It functions in the pathway carbohydrate metabolism; D-ribose degradation; D-ribose 5-phosphate from beta-D-ribopyranose: step 1/2. Its function is as follows. Catalyzes the interconversion of beta-pyran and beta-furan forms of D-ribose. The sequence is that of D-ribose pyranase from Chloroflexus aggregans (strain MD-66 / DSM 9485).